Consider the following 191-residue polypeptide: uncharacterized protein (191 aa).

The protein to B.subtilis GlpP.

This is an uncharacterized protein from Escherichia coli (strain K12).